A 440-amino-acid chain; its full sequence is Adenylosuccinate synthetase (440 aa).

GTP contacts are provided by residues 13–19 (GDEGKGK) and 41–43 (GHT). Residue Asp-14 is the Proton acceptor of the active site. Mg(2+) is bound by residues Asp-14 and Gly-41. IMP contacts are provided by residues 14–17 (DEGK), 39–42 (NAGH), Thr-135, Arg-149, Gln-230, Thr-245, and Arg-313. His-42 functions as the Proton donor in the catalytic mechanism. Residue 309-315 (TVTKRKR) coordinates substrate. Residues Arg-315, 341-343 (KLD), and 423-425 (STG) each bind GTP.

The protein belongs to the adenylosuccinate synthetase family. Homodimer. Mg(2+) is required as a cofactor.

Its subcellular location is the cytoplasm. It catalyses the reaction IMP + L-aspartate + GTP = N(6)-(1,2-dicarboxyethyl)-AMP + GDP + phosphate + 2 H(+). It participates in purine metabolism; AMP biosynthesis via de novo pathway; AMP from IMP: step 1/2. In terms of biological role, plays an important role in the de novo pathway of purine nucleotide biosynthesis. Catalyzes the first committed step in the biosynthesis of AMP from IMP. In Methylobacillus flagellatus (strain ATCC 51484 / DSM 6875 / VKM B-1610 / KT), this protein is Adenylosuccinate synthetase.